The chain runs to 242 residues: Small ribosomal subunit protein uS2 (242 aa).

The protein belongs to the universal ribosomal protein uS2 family.

The protein is Small ribosomal subunit protein uS2 of Vibrio vulnificus (strain CMCP6).